The following is a 287-amino-acid chain: Pol-RFamide neuropeptides (287 aa).

The first 21 residues, 1–21, serve as a signal peptide directing secretion; that stretch reads MNLITLLVLGVSTCLIYGIEA. A propeptide spanning residues 22–52 is cleaved from the precursor; sequence DEKTSSALENEIVEILNGNFKNEKKSIETSD. Q53 carries the pyrrolidone carboxylic acid modification. F59 carries the phenylalanine amide modification. Residues 62–64 constitute a propeptide that is removed on maturation; the sequence is EVN. At Q65 the chain carries Pyrrolidone carboxylic acid. Residue F71 is modified to Phenylalanine amide. Residues 74–77 constitute a propeptide that is removed on maturation; sequence ELSD. Q78 is modified (pyrrolidone carboxylic acid). F84 carries the post-translational modification Phenylalanine amide. Positions 87–90 are excised as a propeptide; sequence ELSD. At Q91 the chain carries Pyrrolidone carboxylic acid. A Phenylalanine amide modification is found at F97. Positions 100-103 are excised as a propeptide; sequence EVLD. The residue at position 104 (Q104) is a Pyrrolidone carboxylic acid. F110 carries the phenylalanine amide modification. Residues 113–116 constitute a propeptide that is removed on maturation; that stretch reads DASN. Residue Q117 is modified to Pyrrolidone carboxylic acid. F123 bears the Phenylalanine amide mark. Positions 126–129 are excised as a propeptide; sequence ELSD. Residue Q130 is modified to Pyrrolidone carboxylic acid. Residue F136 is modified to Phenylalanine amide. Positions 139 to 142 are excised as a propeptide; sequence EGSN. At Q143 the chain carries Pyrrolidone carboxylic acid. F149 carries the phenylalanine amide modification. Positions 152–168 are excised as a propeptide; sequence EASKNDLEKQNGRGDSD. Position 169 is a pyrrolidone carboxylic acid (Q169). F175 bears the Phenylalanine amide mark. Residues 178–181 constitute a propeptide that is removed on maturation; that stretch reads EARK. At Q182 the chain carries Pyrrolidone carboxylic acid. A Phenylalanine amide modification is found at F188. A propeptide spanning residues 192-194 is cleaved from the precursor; sequence DMN. Pyrrolidone carboxylic acid is present on Q195. H201 bears the Histidine amide mark. Positions 204-207 are excised as a propeptide; sequence ETSD. The residue at position 208 (Q208) is a Pyrrolidone carboxylic acid. F214 bears the Phenylalanine amide mark. Residues 217 to 220 constitute a propeptide that is removed on maturation; sequence QLSD. Position 221 is a pyrrolidone carboxylic acid (Q221). F227 carries the post-translational modification Phenylalanine amide. Residues 229 to 267 are disordered; that stretch reads REVKNDKNNPFRSRYTGDSTQLQRENNQPIEELRDNTEK. Residues 230–287 constitute a propeptide that is removed on maturation; the sequence is EVKNDKNNPFRSRYTGDSTQLQRENNQPIEELRDNTEKVSIENKPIMKKTSVKISKTV. Polar residues predominate over residues 238-257; it reads PFRSRYTGDSTQLQRENNQP.

Belongs to the FARP (FMRFamide related peptide) family. In terms of processing, the N-terminal processing sites of the Pol-RFamide peptides are acidic suggesting that cniderian nervous systems may use a variety of unconventional processing procedures.

Its subcellular location is the secreted. Its function is as follows. Has direct action on motoneurons, and effect includes transient inhibition followed by prolonged excitation. The protein is Pol-RFamide neuropeptides of Polyorchis penicillatus (Hydromedusa).